The primary structure comprises 259 residues: Cobalt transport protein CbiM (259 aa).

A signal peptide spans 1–25 (MFRRTTWLTLYLLLAMAALARPAFA). 6 consecutive transmembrane segments (helical) span residues 31-51 (GFLPFNWAAFWFIVVLPFWIW), 68-88 (MLLGLAGAYTFVLSALKLPSV), 100-120 (LGAVLFGPAAMSILGGIVLLF), 132-152 (TLGANTFSMAVVGPFVAYGLY), 160-180 (GSMPLAVFLAATLGDLMTYVT), and 206-226 (IFAVTQLPLAISEGFLTVIVF).

Belongs to the CbiM family. As to quaternary structure, forms an energy-coupling factor (ECF) transporter complex composed of an ATP-binding protein (A component, CbiO), a transmembrane protein (T component, CbiQ) and 2 possible substrate-capture proteins (S components, CbiM and CbiN) of unknown stoichimetry.

The protein resides in the cell membrane. The protein operates within cofactor biosynthesis; adenosylcobalamin biosynthesis. Its function is as follows. Part of the energy-coupling factor (ECF) transporter complex CbiMNOQ involved in cobalt import. This is Cobalt transport protein CbiM from Moorella thermoacetica (strain ATCC 39073 / JCM 9320).